The primary structure comprises 453 residues: Serine/threonine-protein phosphatase 2A regulatory subunit B'' subunit gamma (453 aa).

EF-hand domains lie at 273 to 308 (PSAL…TMTN) and 341 to 376 (KEPA…IQEL). The Ca(2+) site is built by aspartate 286, aspartate 288, asparagine 290, methionine 292, and glutamate 297.

In terms of assembly, interacts with MCM3AP/GANP, PPP5C, and the phosphatase 2A core enzyme composed of the PPP2CA catalytic subunit and the constant regulatory subunit PPP2R1A. Finds in a complex with ABCB1, TFPI2 and PPP2R3C; leading to the dephosphorylation of ABCB1.

The protein resides in the nucleus. The protein localises to the cytoplasm. Functionally, may regulate MCM3AP phosphorylation through phosphatase recruitment. May act as a negative regulator of ABCB1 expression and function through the dephosphorylation of ABCB1 by TFPI2/PPP2R3C complex. May play a role in the activation-induced cell death of B-cells. This Bos taurus (Bovine) protein is Serine/threonine-protein phosphatase 2A regulatory subunit B'' subunit gamma (PPP2R3C).